Reading from the N-terminus, the 200-residue chain is Fibrillarin-like rRNA/tRNA 2'-O-methyltransferase (200 aa).

S-adenosyl-L-methionine-binding positions include 62-63 (TT), 78-79 (EF), 103-104 (DA), and 123-126 (DVAQ).

It belongs to the methyltransferase superfamily. Fibrillarin family. Interacts with nop5. Component of box C/D small ribonucleoprotein (sRNP) particles that contain rpl7ae, FlpA and nop5, plus a guide RNA.

In terms of biological role, involved in pre-rRNA and tRNA processing. Utilizes the methyl donor S-adenosyl-L-methionine to catalyze the site-specific 2'-hydroxyl methylation of ribose moieties in rRNA and tRNA. Site specificity is provided by a guide RNA that base pairs with the substrate. Methylation occurs at a characteristic distance from the sequence involved in base pairing with the guide RNA. The polypeptide is Fibrillarin-like rRNA/tRNA 2'-O-methyltransferase (Methanoculleus marisnigri (strain ATCC 35101 / DSM 1498 / JR1)).